The following is a 93-amino-acid chain: MLFFSYFKDLVGQEVTVELKNDLAIRGTLHSVDQYLNIKLENTRVVDQDKYPHMLSVRNCFIRGSVVRYVQLPKDGVDVDLLHDAARREARGG.

A Sm domain is found at 2–76 (LFFSYFKDLV…VRYVQLPKDG (75 aa)).

The protein belongs to the snRNP Sm proteins family. In terms of assembly, component of the heptameric LSM1-LSM7 complex that forms a seven-membered ring structure with a donut shape. The LSM subunits are arranged in the order LSM1, LSM2, LSM3, LSM6, LSM5, LSM7 and LSM4. LSM2 subunit interacts only with its two neighboring subunits, LSM1A or LSM1B and LSM3A or LSM3B. Component of the heptameric LSM2-LSM8 complex that forms a seven-membered ring structure with a donut shape. The LSM subunits are arranged in the order LSM8, LSM2, LSM3, LSM6, LSM5, LSM7 and LSM4. LSM2 subunit interacts only with its two neighboring subunits, LSM8 and LSM3A or LSM3B. As to expression, expressed in roots, leaves, stems, flowers and siliques.

The protein resides in the cytoplasm. Its subcellular location is the nucleus. Functionally, component of LSM protein complexes, which are involved in RNA processing. Component of the cytoplasmic LSM1-LSM7 complex which is involved in mRNA degradation by promoting decapping and leading to accurate 5'-3' mRNA decay. The cytoplasmic LSM1-LSM7 complex regulates developmental gene expression by the decapping of specific development-related transcripts. Component of the nuclear LSM2-LSM8 complex which is involved splicing nuclear mRNAs. LSM2-LSM8 binds directly to the U6 small nuclear RNAs (snRNAs) and is essential for accurate splicing of selected development-related mRNAs through the stabilization of the spliceosomal U6 snRNA. Plays a critical role in the regulation of development-related gene expression. In Arabidopsis thaliana (Mouse-ear cress), this protein is Sm-like protein LSM2.